The following is a 513-amino-acid chain: ATP synthase subunit alpha (513 aa).

169-176 is an ATP binding site; the sequence is GDRQTGKT.

Belongs to the ATPase alpha/beta chains family. As to quaternary structure, F-type ATPases have 2 components, CF(1) - the catalytic core - and CF(0) - the membrane proton channel. CF(1) has five subunits: alpha(3), beta(3), gamma(1), delta(1), epsilon(1). CF(0) has three main subunits: a(1), b(2) and c(9-12). The alpha and beta chains form an alternating ring which encloses part of the gamma chain. CF(1) is attached to CF(0) by a central stalk formed by the gamma and epsilon chains, while a peripheral stalk is formed by the delta and b chains.

It is found in the cell inner membrane. The enzyme catalyses ATP + H2O + 4 H(+)(in) = ADP + phosphate + 5 H(+)(out). In terms of biological role, produces ATP from ADP in the presence of a proton gradient across the membrane. The alpha chain is a regulatory subunit. The polypeptide is ATP synthase subunit alpha (Proteus mirabilis (strain HI4320)).